We begin with the raw amino-acid sequence, 304 residues long: Type II methyltransferase M.HindV (304 aa).

Residues 1–299 enclose the SAM-dependent MTase C5-type domain; that stretch reads MKCVDLFSGC…SAIINFEKEP (299 aa). Cys-75 is an active-site residue.

It belongs to the class I-like SAM-binding methyltransferase superfamily. C5-methyltransferase family.

The enzyme catalyses a 2'-deoxycytidine in DNA + S-adenosyl-L-methionine = a 5-methyl-2'-deoxycytidine in DNA + S-adenosyl-L-homocysteine + H(+). In terms of biological role, a methylase, recognizes the double-stranded sequence 5'-GRCGYC-3', methylates C-? on both strands, and protects the DNA from cleavage by the HindV endonuclease. This Haemophilus influenzae (strain ATCC 51907 / DSM 11121 / KW20 / Rd) protein is Type II methyltransferase M.HindV (hindVM).